Consider the following 213-residue polypeptide: Pyrrolidone-carboxylate peptidase (213 aa).

Active-site residues include Glu81, Cys144, and His166.

The protein belongs to the peptidase C15 family. In terms of assembly, homodimer.

The protein resides in the cytoplasm. It catalyses the reaction Release of an N-terminal pyroglutamyl group from a polypeptide, the second amino acid generally not being Pro.. Removes 5-oxoproline from various penultimate amino acid residues except L-proline. This is Pyrrolidone-carboxylate peptidase (pcp) from Pseudomonas fluorescens.